The chain runs to 554 residues: uncharacterized protein (554 aa).

Disordered stretches follow at residues 1-127 (MTTH…NYND), 139-173 (IEDD…SKAG), 293-395 (NNNN…PLSE), and 416-509 (FGFS…RKIR). Low complexity-rich tracts occupy residues 9–30 (SSSN…NNNI), 46–55 (DPTSSSSPTN), and 63–125 (SNSN…LINY). Residues 139 to 153 (IEDDEEYEEIGDEES) are compositionally biased toward acidic residues. Residues 164-173 (NDSLNGSKAG) are compositionally biased toward polar residues. Composition is skewed to low complexity over residues 293–387 (NNNN…CSSN), 416–449 (FGFS…SSIS), and 461–484 (SPPL…NNNH). Basic residues predominate over residues 485–508 (HNNHHQNHHHQNHNHQHHSKKRKI).

This is an uncharacterized protein from Dictyostelium discoideum (Social amoeba).